We begin with the raw amino-acid sequence, 97 residues long: Putative membrane protein insertion efficiency factor (97 aa).

The segment at 68–97 (VPGTELNTAPRSGQACNPTESTHSTTQTRH) is disordered. The span at 72–97 (ELNTAPRSGQACNPTESTHSTTQTRH) shows a compositional bias: polar residues.

It belongs to the UPF0161 family.

Its subcellular location is the cell inner membrane. In terms of biological role, could be involved in insertion of integral membrane proteins into the membrane. In Marinobacter nauticus (strain ATCC 700491 / DSM 11845 / VT8) (Marinobacter aquaeolei), this protein is Putative membrane protein insertion efficiency factor.